Reading from the N-terminus, the 985-residue chain is Coiled-coil domain-containing protein 33 (985 aa).

The disordered stretch occupies residues 228–263 (MSPFSTDSDQEGLSWEAGPWQHPAQVPEEPQGRLDT). The C2 domain occupies 263–398 (TSQDPYPAAN…VFLRGVNEPL (136 aa)). Residues 599–745 (VEMNNYRRAM…LEERLCERKE (147 aa)) are a coiled coil. The interval 821–842 (AERLQDTNGPGHPKSTETLPAQ) is disordered. The stretch at 885-928 (DKFNLLAKLEQAQSRILSLENQLEESARHWAREKQNLAIRLQEQ) forms a coiled coil. Residues 931 to 985 (GFGQPPNSIIIDQPNAGASKNPQQLSKLEPSLPSSDKKLNRPSDSQIEISNNQKT) are disordered. Polar residues-rich tracts occupy residues 946–956 (AGASKNPQQLS) and 972–985 (PSDSQIEISNNQKT).

This is Coiled-coil domain-containing protein 33 (Ccdc33) from Mus musculus (Mouse).